The following is a 59-amino-acid chain: MAEEILNREYEVEYGGKRYILRPIKAWVLQPPGKPGVVVALFRLPDGKTVRKVVMKLPP.

The protein belongs to the Cren7 family. In terms of assembly, monomer. Post-translationally, methylated at multiple sites, to varying extents.

The protein localises to the chromosome. It is found in the cytoplasm. A chromatin protein, binds double-stranded DNA without sequence specificity. Constrains negative DNA supercoils. The protein is Chromatin protein Cren7 of Pyrobaculum arsenaticum (strain DSM 13514 / JCM 11321 / PZ6).